A 307-amino-acid chain; its full sequence is Solute carrier family 25 member 53 (307 aa).

The disordered stretch occupies residues 1 to 23 (MGEQNHSPGKELQHRTRAEAPGK). Positions 8 to 22 (PGKELQHRTRAEAPG) are enriched in basic and acidic residues. 3 Solcar repeats span residues 25 to 105 (SWHS…LLCF), 112 to 202 (HTLG…IQDG), and 210 to 302 (HWVP…HSRK). 6 helical membrane passes run 31 to 51 (YALG…IYKV), 82 to 102 (YPPL…YDSL), 112 to 132 (HTLG…AVAL), 181 to 201 (VLAR…PIQD), 215 to 235 (LVSG…LIVL), and 269 to 290 (IYRG…TTAI).

It belongs to the mitochondrial carrier (TC 2.A.29) family.

The protein resides in the mitochondrion inner membrane. The chain is Solute carrier family 25 member 53 (SLC25A53) from Homo sapiens (Human).